Consider the following 418-residue polypeptide: Gamma-glutamyl phosphate reductase (418 aa).

It belongs to the gamma-glutamyl phosphate reductase family.

It is found in the cytoplasm. The catalysed reaction is L-glutamate 5-semialdehyde + phosphate + NADP(+) = L-glutamyl 5-phosphate + NADPH + H(+). It functions in the pathway amino-acid biosynthesis; L-proline biosynthesis; L-glutamate 5-semialdehyde from L-glutamate: step 2/2. Catalyzes the NADPH-dependent reduction of L-glutamate 5-phosphate into L-glutamate 5-semialdehyde and phosphate. The product spontaneously undergoes cyclization to form 1-pyrroline-5-carboxylate. The polypeptide is Gamma-glutamyl phosphate reductase (Halothermothrix orenii (strain H 168 / OCM 544 / DSM 9562)).